A 284-amino-acid polypeptide reads, in one-letter code: METKILDGLKISKKIIKKIKKKIEKRKKKRKKIPGLAMIVIGNNPASLIYVNKKREACNQAGFFSIYWHLSNQIEEIELINLIKKLNKNKCIDGILIQLPLPIKINYLKIITSIDPKKDVDGFHPYNLGSLCQNNPQFRSCTSKGVITLLKKYKINIHGLYAVIIGSSNIVGKPMYMELLLAGCTVTIVNKNTKNIKTYVKKADLVVIAIGQPNFLYGHWIKLGAIVIDIGINYLYNKNKYKIVGDVHFKSTSVKTSYITPVPGGVGPMTVVSLLENTLQACIM.

NADP(+) contacts are provided by residues 166-168 (GSS) and I232.

It belongs to the tetrahydrofolate dehydrogenase/cyclohydrolase family. In terms of assembly, homodimer.

The catalysed reaction is (6R)-5,10-methylene-5,6,7,8-tetrahydrofolate + NADP(+) = (6R)-5,10-methenyltetrahydrofolate + NADPH. It carries out the reaction (6R)-5,10-methenyltetrahydrofolate + H2O = (6R)-10-formyltetrahydrofolate + H(+). Its pathway is one-carbon metabolism; tetrahydrofolate interconversion. Catalyzes the oxidation of 5,10-methylenetetrahydrofolate to 5,10-methenyltetrahydrofolate and then the hydrolysis of 5,10-methenyltetrahydrofolate to 10-formyltetrahydrofolate. The sequence is that of Bifunctional protein FolD from Buchnera aphidicola subsp. Cinara cedri (strain Cc).